Consider the following 263-residue polypeptide: uncharacterized protein (263 aa).

The region spanning 44–131 (QVYSLGTPNG…YLADKFNHLI (88 aa)) is the GST N-terminal domain. Residues 134–263 (DWAQRTEVLN…ALEVDYKAIK (130 aa)) enclose the GST C-terminal domain.

This sequence belongs to the GST superfamily. As to quaternary structure, homodimer.

This is an uncharacterized protein from Streptococcus mutans serotype c (strain ATCC 700610 / UA159).